Consider the following 53-residue polypeptide: uncharacterized protein (53 aa).

This sequence belongs to the ELIP/psbS family.

Its subcellular location is the plastid. It localises to the chloroplast. Possible role in chlorophyll and/or carotenoid binding. This is an uncharacterized protein from Guillardia theta (Cryptophyte).